A 292-amino-acid chain; its full sequence is Cyclic dipurine nucleotide synthase (292 aa).

Residue Gln-47 coordinates ATP. 48–52 (GSYRN) is a binding site for GTP. Asp-61 and Asp-63 together coordinate Mg(2+). Residues Asp-63, 121–122 (NK), and Asp-136 contribute to the ATP site. Position 136 (Asp-136) interacts with Mg(2+). GTP is bound by residues Lys-197 and Ser-216.

This sequence belongs to the CD-NTase family. E01 subfamily. It depends on Mg(2+) as a cofactor.

It catalyses the reaction 2 ATP = 3',3'-c-di-AMP + 2 diphosphate. The catalysed reaction is 2 GTP = 3',3'-c-di-GMP + 2 diphosphate. It carries out the reaction GTP + ATP = 3',3'-cGAMP + 2 diphosphate. Cyclic nucleotide synthase (second messenger synthase) of a CBASS antivirus system. CBASS (cyclic oligonucleotide-based antiphage signaling system) provides immunity against bacteriophage. The CD-NTase protein synthesizes cyclic nucleotides in response to infection; these serve as specific second messenger signals. The signals activate a diverse range of effectors, leading to bacterial cell death and thus abortive phage infection. A type I-A(GA) CBASS system. Its function is as follows. Cyclic dinucleotide synthase that catalyzes the synthesis of 3'3'-cyclic GMP-AMP (cGAMP) from GTP and ATP, and of c-di-AMP and c-di-GMP, that are second messengers for cell signal transduction. This Elizabethkingia meningoseptica (Chryseobacterium meningosepticum) protein is Cyclic dipurine nucleotide synthase.